A 141-amino-acid polypeptide reads, in one-letter code: Large ribosomal subunit protein uL16 (141 aa).

Over residues 1-17 the composition is skewed to basic residues; it reads MLQPKRTKYRKVQKGRM. Residues 1-29 are disordered; it reads MLQPKRTKYRKVQKGRMKGNSQRGHELSN.

This sequence belongs to the universal ribosomal protein uL16 family. As to quaternary structure, part of the 50S ribosomal subunit.

In terms of biological role, binds 23S rRNA and is also seen to make contacts with the A and possibly P site tRNAs. The polypeptide is Large ribosomal subunit protein uL16 (Flavobacterium johnsoniae (strain ATCC 17061 / DSM 2064 / JCM 8514 / BCRC 14874 / CCUG 350202 / NBRC 14942 / NCIMB 11054 / UW101) (Cytophaga johnsonae)).